Consider the following 72-residue polypeptide: MAKSDVIEMEGVIVDTLPNTMFRVELSNGHVVTAHISGKMRKNYIRILTGDKVKVELTPYDLSKGRIVYRAR.

An S1-like domain is found at 1–72 (MAKSDVIEME…SKGRIVYRAR (72 aa)).

It belongs to the IF-1 family. As to quaternary structure, component of the 30S ribosomal translation pre-initiation complex which assembles on the 30S ribosome in the order IF-2 and IF-3, IF-1 and N-formylmethionyl-tRNA(fMet); mRNA recruitment can occur at any time during PIC assembly.

It is found in the cytoplasm. Functionally, one of the essential components for the initiation of protein synthesis. Stabilizes the binding of IF-2 and IF-3 on the 30S subunit to which N-formylmethionyl-tRNA(fMet) subsequently binds. Helps modulate mRNA selection, yielding the 30S pre-initiation complex (PIC). Upon addition of the 50S ribosomal subunit IF-1, IF-2 and IF-3 are released leaving the mature 70S translation initiation complex. The sequence is that of Translation initiation factor IF-1 from Marinobacter nauticus (strain ATCC 700491 / DSM 11845 / VT8) (Marinobacter aquaeolei).